A 183-amino-acid polypeptide reads, in one-letter code: Alkyl hydroperoxide reductase AhpD (183 aa).

C132 functions as the Proton donor in the catalytic mechanism. An intrachain disulfide couples C132 to C135. C135 (cysteine sulfenic acid (-SOH) intermediate) is an active-site residue.

The protein belongs to the AhpD family.

The catalysed reaction is N(6)-[(R)-dihydrolipoyl]-L-lysyl-[lipoyl-carrier protein] + a hydroperoxide = N(6)-[(R)-lipoyl]-L-lysyl-[lipoyl-carrier protein] + an alcohol + H2O. Its function is as follows. Antioxidant protein with alkyl hydroperoxidase activity. Required for the reduction of the AhpC active site cysteine residues and for the regeneration of the AhpC enzyme activity. The polypeptide is Alkyl hydroperoxide reductase AhpD (Caulobacter vibrioides (strain ATCC 19089 / CIP 103742 / CB 15) (Caulobacter crescentus)).